Here is a 221-residue protein sequence, read N- to C-terminus: HP1-HOAP-interacting protein (221 aa).

The tract at residues 69 to 113 (NAKRHKMARETAASITDVSGSQSSSHQSAPSLHVSGQSSEFGASY) is disordered. Residues 86-103 (VSGSQSSSHQSAPSLHVS) show a composition bias toward low complexity.

As to quaternary structure, component of the HipHop-HOAP telomere-capping complex, composed of at least HipHop and cav/HOAP, and may include Su(var)205/HP1; HipHop and cav/HOAP, but not Su(var)205, are interdependent for their protein stability. Interacts (via N-terminus) with cav/HOAP and Su(var)205/HP1. The HipHop-HOAP complex recruits the MTV complex, consisting of moi/modigliani, tea and ver/verrocchio, to telomeres to form the terminin telomere-capping complex.

It localises to the nucleus. The protein resides in the chromosome. Its subcellular location is the telomere. Part of the HipHop-HOAP complex that recruits the MTV complex to form the terminin telomere-capping complex, which binds to chromosome ends in a sequence-independent manner and prevents telomere fusion. In Drosophila melanogaster (Fruit fly), this protein is HP1-HOAP-interacting protein.